Reading from the N-terminus, the 548-residue chain is Chaperonin GroEL (548 aa).

ATP contacts are provided by residues 29-32 (TMGP), lysine 50, 86-90 (DGTTT), glycine 414, 478-480 (NAA), and aspartate 494.

It belongs to the chaperonin (HSP60) family. In terms of assembly, forms a cylinder of 14 subunits composed of two heptameric rings stacked back-to-back. Interacts with the co-chaperonin GroES.

It is found in the cytoplasm. It carries out the reaction ATP + H2O + a folded polypeptide = ADP + phosphate + an unfolded polypeptide.. In terms of biological role, together with its co-chaperonin GroES, plays an essential role in assisting protein folding. The GroEL-GroES system forms a nano-cage that allows encapsulation of the non-native substrate proteins and provides a physical environment optimized to promote and accelerate protein folding. In Legionella pneumophila (strain Corby), this protein is Chaperonin GroEL.